A 764-amino-acid polypeptide reads, in one-letter code: Thyrotropin receptor (764 aa).

A signal peptide spans 1-20 (MRPPPLLHLALLLALPRSLG). The Extracellular segment spans residues 21–413 (GKGCPSPPCE…EFNPCEDIMG (393 aa)). Residues cysteine 31 and cysteine 41 are joined by a disulfide bond. 2 N-linked (GlcNAc...) asparagine glycosylation sites follow: asparagine 77 and asparagine 99. LRR repeat units follow at residues 125–149 (LPLL…KVYS), 150–174 (TDVF…AFQG), 176–199 (CNET…AFNG), 201–223 (KLDA…AFGG), 225–248 (YSGP…GLEH), and 250–271 (KELI…SFLH). Asparagine 177 and asparagine 198 each carry an N-linked (GlcNAc...) asparagine glycan. Residue asparagine 302 is glycosylated (N-linked (GlcNAc...) asparagine). Tyrosine 385 carries the sulfotyrosine modification. A helical transmembrane segment spans residues 414 to 441 (YKFLRIVVWFVSLLALLGNVFVLIVLLT). At 442–450 (SHYKLTVPR) the chain is on the cytoplasmic side. The helical transmembrane segment at 451–473 (FLMCNLAFADFCMGMYLLLIASV) threads the bilayer. At 474-494 (DLYTHSEYYNHAIDWQTGPGC) the chain is on the extracellular side. Cysteines 494 and 569 form a disulfide. The helical transmembrane segment at 495–517 (NTAGFFTVFASELSVYTLTVITL) threads the bilayer. At 518–537 (ERWYAITFAMRLDRKIRLRH) the chain is on the cytoplasmic side. A helical transmembrane segment spans residues 538–560 (AYAIMVGGWVCCFLLALLPLVGI). The Extracellular segment spans residues 561–580 (SSYAKVSICLPMDTETPLAL). A helical membrane pass occupies residues 581-602 (AYIILVLLLNIVAFIIVCSCYV). The Cytoplasmic segment spans residues 603 to 625 (KIYITVRNPQYNPGDKDTKIAKR). A helical transmembrane segment spans residues 626–649 (MAVLIFTDFMCMAPISFYALSALM). At 650-660 (NKPLITVTNSK) the chain is on the extracellular side. Residues 661-682 (ILLVLFYPLNSCANPFLYAIFT) traverse the membrane as a helical segment. Over 683–764 (KAFQRDVFIL…ISKEYNQTVL (82 aa)) the chain is Cytoplasmic. A PDZ-binding motif is present at residues 762–764 (TVL).

The protein belongs to the G-protein coupled receptor 1 family. FSH/LSH/TSH subfamily. As to quaternary structure, interacts with heterodimer GPHA2:GPHB5; this interaction stimulates cAMP production. Interacts (via the PDZ-binding motif) with SCRIB; regulates TSHR trafficking and function. In terms of processing, glycosylated. Sulfated. Sulfation on Tyr-385 plays a role in thyrotropin receptor binding and activation.

The protein resides in the cell membrane. It localises to the basolateral cell membrane. In terms of biological role, receptor for the thyroid-stimulating hormone (TSH) or thyrotropin. Also acts as a receptor for the heterodimeric glycoprotein hormone (GPHA2:GPHB5) or thyrostimulin. The activity of this receptor is mediated by G proteins which activate adenylate cyclase. Plays a central role in controlling thyroid cell metabolism. This chain is Thyrotropin receptor (TSHR), found in Canis lupus familiaris (Dog).